Consider the following 217-residue polypeptide: Homologous-pairing protein 2 homolog (217 aa).

The stretch at 84–152 (ADLHGLDASI…RLKNIKAATN (69 aa)) forms a coiled coil. A DNA-binding region spans residues 118-182 (TSALTTPEMQ…WRKRKRMTTE (65 aa)).

This sequence belongs to the HOP2 family. Interacts with the DNA-binding domain of the nuclear receptors NR3C1/GR, ESR2/ER-beta, THRB and RXRA. Forms a stable heterodimer with MND1. Interacts with PSMC3/TBP1. Post-translationally, phosphorylated by PKA, PKC and MAPK. As to expression, highly expressed in testis and more specifically in spermatocytes. Detected in spleen, ovary and thymus.

It localises to the nucleus. Its function is as follows. Plays an important role in meiotic recombination. Stimulates DMC1-mediated strand exchange required for pairing homologous chromosomes during meiosis. The complex PSMC3IP/MND1 binds DNA, stimulates the recombinase activity of DMC1 as well as DMC1 D-loop formation from double-strand DNA. This complex stabilizes presynaptic RAD51 and DMC1 filaments formed on single strand DNA to capture double-strand DNA. This complex stimulates both synaptic and presynaptic critical steps in RAD51 and DMC1-promoted homologous pairing. May inhibit HIV-1 viral protein TAT activity and modulate the activity of proteasomes through association with PSMC3. The protein is Homologous-pairing protein 2 homolog (Psmc3ip) of Mus musculus (Mouse).